The chain runs to 797 residues: Methionine--tRNA ligase, cytoplasmic (797 aa).

Positions 26 to 36 (PYVNNVPHLGN) match the 'HIGH' region motif. A 'KMSKS' region motif is present at residues 348 to 352 (KFSKS). Lys-351 contributes to the ATP binding site. Residues 601-634 (DQLNKTKLSDAKKQKASSKGGGKPKPQPAADREI) are disordered. Residues 635 to 738 (TMARLDIRVG…KTANIGERVT (104 aa)) form the tRNA-binding domain.

This sequence belongs to the class-I aminoacyl-tRNA synthetase family.

It is found in the cytoplasm. The protein resides in the cytosol. It catalyses the reaction tRNA(Met) + L-methionine + ATP = L-methionyl-tRNA(Met) + AMP + diphosphate. The polypeptide is Methionine--tRNA ligase, cytoplasmic (Arabidopsis thaliana (Mouse-ear cress)).